A 281-amino-acid chain; its full sequence is Probable endonuclease 4 (281 aa).

Zn(2+)-binding residues include histidine 69, histidine 109, glutamate 145, aspartate 179, histidine 182, histidine 216, aspartate 229, histidine 231, and glutamate 261.

The protein belongs to the AP endonuclease 2 family. It depends on Zn(2+) as a cofactor.

It carries out the reaction Endonucleolytic cleavage to 5'-phosphooligonucleotide end-products.. Functionally, endonuclease IV plays a role in DNA repair. It cleaves phosphodiester bonds at apurinic or apyrimidinic (AP) sites, generating a 3'-hydroxyl group and a 5'-terminal sugar phosphate. In Buchnera aphidicola subsp. Acyrthosiphon pisum (strain APS) (Acyrthosiphon pisum symbiotic bacterium), this protein is Probable endonuclease 4.